A 346-amino-acid polypeptide reads, in one-letter code: Putative aminopeptidase YhfE (346 aa).

2 residues coordinate a divalent metal cation: His68 and Asp185. The active-site Proton acceptor is the Glu219. 3 residues coordinate a divalent metal cation: Glu220, Asp240, and His320.

Belongs to the peptidase M42 family. A divalent metal cation is required as a cofactor.

This is Putative aminopeptidase YhfE (yhfE) from Bacillus subtilis (strain 168).